The primary structure comprises 553 residues: Hydroxylamine reductase (553 aa).

4 residues coordinate [2Fe-2S] cluster: Cys3, Cys6, Cys18, and Cys25. Residues His249, Glu273, Cys317, Cys405, Cys433, Cys459, Glu493, and Lys495 each coordinate hybrid [4Fe-2O-2S] cluster. Position 405 is a cysteine persulfide (Cys405).

Belongs to the HCP family. It depends on [2Fe-2S] cluster as a cofactor. Requires hybrid [4Fe-2O-2S] cluster as cofactor.

The protein resides in the cytoplasm. The catalysed reaction is A + NH4(+) + H2O = hydroxylamine + AH2 + H(+). Its function is as follows. Catalyzes the reduction of hydroxylamine to form NH(3) and H(2)O. This Actinobacillus succinogenes (strain ATCC 55618 / DSM 22257 / CCUG 43843 / 130Z) protein is Hydroxylamine reductase.